The following is a 571-amino-acid chain: Proline--tRNA ligase (571 aa).

Belongs to the class-II aminoacyl-tRNA synthetase family. ProS type 1 subfamily. As to quaternary structure, homodimer.

Its subcellular location is the cytoplasm. The enzyme catalyses tRNA(Pro) + L-proline + ATP = L-prolyl-tRNA(Pro) + AMP + diphosphate. In terms of biological role, catalyzes the attachment of proline to tRNA(Pro) in a two-step reaction: proline is first activated by ATP to form Pro-AMP and then transferred to the acceptor end of tRNA(Pro). As ProRS can inadvertently accommodate and process non-cognate amino acids such as alanine and cysteine, to avoid such errors it has two additional distinct editing activities against alanine. One activity is designated as 'pretransfer' editing and involves the tRNA(Pro)-independent hydrolysis of activated Ala-AMP. The other activity is designated 'posttransfer' editing and involves deacylation of mischarged Ala-tRNA(Pro). The misacylated Cys-tRNA(Pro) is not edited by ProRS. The sequence is that of Proline--tRNA ligase from Pseudomonas fluorescens (strain ATCC BAA-477 / NRRL B-23932 / Pf-5).